A 464-amino-acid chain; its full sequence is Glycosyl hydrolase family 109 protein 1 (464 aa).

Positions 1–16 (MFKHLNALFIGLALFA) are cleaved as a signal peptide. Residue Cys-17 is the site of N-palmitoyl cysteine attachment. A lipid anchor (S-diacylglycerol cysteine) is attached at Cys-17. NAD(+) is bound by residues 63–64 (MR), Asp-85, 134–137 (WKHH), 154–155 (EV), and Asn-183. Residues Tyr-212, Arg-228, 240–243 (YATH), and Tyr-318 each bind substrate. Residue Tyr-240 coordinates NAD(+).

This sequence belongs to the Gfo/Idh/MocA family. Glycosyl hydrolase 109 subfamily. It depends on NAD(+) as a cofactor.

The protein resides in the cell membrane. Glycosidase. Has no alpha-N-acetylgalactosaminidase activity. The protein is Glycosyl hydrolase family 109 protein 1 of Bacteroides fragilis (strain ATCC 25285 / DSM 2151 / CCUG 4856 / JCM 11019 / LMG 10263 / NCTC 9343 / Onslow / VPI 2553 / EN-2).